A 398-amino-acid chain; its full sequence is Vacuolar protease A (398 aa).

A signal peptide spans 1 to 18 (MKSTSLLTASVLLGSASA). Positions 19–70 (AVHKLKLNKVPLDEQLYTHNIDAHVRALGQKYMGIRPNVHQELLEENSLNDM) are cleaved as a propeptide — activation peptide. Residues 85–395 (YFSEISLGTP…DLGNNAVGLA (311 aa)) enclose the Peptidase A1 domain. D103 is a catalytic residue. Cysteines 116 and 121 form a disulfide. N138 carries an N-linked (GlcNAc...) asparagine glycan. The active site involves D287. Residues C321 and C354 are joined by a disulfide bond. N338 carries N-linked (GlcNAc...) asparagine glycosylation.

It belongs to the peptidase A1 family.

It is found in the vacuole lumen. The protein localises to the secreted. It carries out the reaction Hydrolysis of proteins with broad specificity for peptide bonds. Cleaves -Leu-Leu-|-Val-Tyr- bond in a synthetic substrate. Does not act on esters of Tyr or Arg.. In terms of biological role, vacuolar aspartic endopeptidase which is probably also secreted and contributes to virulence. In Aspergillus fumigatus (strain ATCC MYA-4609 / CBS 101355 / FGSC A1100 / Af293) (Neosartorya fumigata), this protein is Vacuolar protease A (pep2).